Reading from the N-terminus, the 159-residue chain is Transcription elongation factor A protein-like 1 (159 aa).

Positions 1–121 (MDKPRKENEE…QFKGDIHGRN (121 aa)) are disordered. The span at 17-34 (KTDEERPPVEHSPEKQSP) shows a compositional bias: basic and acidic residues. The span at 37 to 54 (QSSEEQSSEEEFFPEELL) shows a compositional bias: acidic residues. Composition is skewed to basic and acidic residues over residues 64–80 (SEERPPQEGLSRKDLFE) and 95–119 (HKLEEGSFKERLARSRPQFKGDIHG).

Belongs to the TFS-II family. TFA subfamily.

It is found in the nucleus. In terms of biological role, may be involved in transcriptional regulation. Modulates various viral and cellular promoters in a promoter context-dependent manner. Does not bind DNA directly. In Gorilla gorilla gorilla (Western lowland gorilla), this protein is Transcription elongation factor A protein-like 1.